Here is a 441-residue protein sequence, read N- to C-terminus: N-succinylarginine dihydrolase (441 aa).

Substrate-binding positions include 19 to 28, Asn110, and 137 to 138; these read AGLSFGNEAS and HR. The active site involves Glu174. Arg212 contributes to the substrate binding site. His248 is an active-site residue. 2 residues coordinate substrate: Asp250 and Asn359. The Nucleophile role is filled by Cys365.

It belongs to the succinylarginine dihydrolase family. As to quaternary structure, homodimer.

It carries out the reaction N(2)-succinyl-L-arginine + 2 H2O + 2 H(+) = N(2)-succinyl-L-ornithine + 2 NH4(+) + CO2. It functions in the pathway amino-acid degradation; L-arginine degradation via AST pathway; L-glutamate and succinate from L-arginine: step 2/5. Catalyzes the hydrolysis of N(2)-succinylarginine into N(2)-succinylornithine, ammonia and CO(2). This chain is N-succinylarginine dihydrolase, found in Cronobacter sakazakii (strain ATCC BAA-894) (Enterobacter sakazakii).